Reading from the N-terminus, the 429-residue chain is Phosphomethylpyrimidine synthase (429 aa).

Substrate-binding positions include Asn-66, Met-95, Tyr-124, His-163, 185 to 187 (SRG), 226 to 229 (DGLR), and Glu-265. His-269 is a binding site for Zn(2+). A substrate-binding site is contributed by Tyr-292. His-333 provides a ligand contact to Zn(2+). [4Fe-4S] cluster contacts are provided by Cys-407, Cys-410, and Cys-414.

It belongs to the ThiC family. Requires [4Fe-4S] cluster as cofactor.

The enzyme catalyses 5-amino-1-(5-phospho-beta-D-ribosyl)imidazole + S-adenosyl-L-methionine = 4-amino-2-methyl-5-(phosphooxymethyl)pyrimidine + CO + 5'-deoxyadenosine + formate + L-methionine + 3 H(+). It functions in the pathway cofactor biosynthesis; thiamine diphosphate biosynthesis. Catalyzes the synthesis of the hydroxymethylpyrimidine phosphate (HMP-P) moiety of thiamine from aminoimidazole ribotide (AIR) in a radical S-adenosyl-L-methionine (SAM)-dependent reaction. The polypeptide is Phosphomethylpyrimidine synthase (Pyrococcus abyssi (strain GE5 / Orsay)).